Reading from the N-terminus, the 60-residue chain is Arabinogalactan protein 12 (60 aa).

The signal sequence occupies residues 1-27 (MESMKMKLIVVLMVAIVAFSAVGNVAA). Glutamine 28 is subject to Pyrrolidone carboxylic acid. Proline 32, proline 34, and proline 36 each carry 4-hydroxyproline. O-linked (Ara...) hydroxyproline glycans are attached at residues proline 32, proline 34, and proline 36. Serine 38 is lipidated: GPI-anchor amidated serine. A propeptide spans 39–60 (DAAMFVPALFASVAALASGFLF) (removed in mature form).

This sequence belongs to the AG-peptide AGP family. In terms of processing, contains 4-hydroxyproline; hydroxylated on Pro-32, Pro-34 and Pro-36. O-glycosylated on hydroxyprolines; noncontiguous hydroxylproline residues are glycosylated with arabinogalactan. In terms of tissue distribution, expressed in reproductive tissues. Expressed in chalaza, funiculus, stigma, septum, style and transmitting tract.

The protein resides in the cell membrane. Proteoglycan that seems to be implicated in diverse developmental roles such as differentiation, cell-cell recognition, embryogenesis and programmed cell death. The chain is Arabinogalactan protein 12 from Arabidopsis thaliana (Mouse-ear cress).